Reading from the N-terminus, the 350-residue chain is DNA polymerase IV (350 aa).

One can recognise a UmuC domain in the interval 7 to 188; it reads IIHIDMDYFF…LPVKKLFGVG (182 aa). Mg(2+) is bound by residues aspartate 11 and aspartate 106. The active site involves glutamate 107.

Belongs to the DNA polymerase type-Y family. Monomer. The cofactor is Mg(2+).

The protein localises to the cytoplasm. It carries out the reaction DNA(n) + a 2'-deoxyribonucleoside 5'-triphosphate = DNA(n+1) + diphosphate. Poorly processive, error-prone DNA polymerase involved in untargeted mutagenesis. Copies undamaged DNA at stalled replication forks, which arise in vivo from mismatched or misaligned primer ends. These misaligned primers can be extended by PolIV. Exhibits no 3'-5' exonuclease (proofreading) activity. May be involved in translesional synthesis, in conjunction with the beta clamp from PolIII. The chain is DNA polymerase IV from Francisella philomiragia subsp. philomiragia (strain ATCC 25017 / CCUG 19701 / FSC 153 / O#319-036).